The primary structure comprises 97 residues: Aspartyl/glutamyl-tRNA(Asn/Gln) amidotransferase subunit C (97 aa).

The protein belongs to the GatC family. As to quaternary structure, heterotrimer of A, B and C subunits.

The enzyme catalyses L-glutamyl-tRNA(Gln) + L-glutamine + ATP + H2O = L-glutaminyl-tRNA(Gln) + L-glutamate + ADP + phosphate + H(+). The catalysed reaction is L-aspartyl-tRNA(Asn) + L-glutamine + ATP + H2O = L-asparaginyl-tRNA(Asn) + L-glutamate + ADP + phosphate + 2 H(+). In terms of biological role, allows the formation of correctly charged Asn-tRNA(Asn) or Gln-tRNA(Gln) through the transamidation of misacylated Asp-tRNA(Asn) or Glu-tRNA(Gln) in organisms which lack either or both of asparaginyl-tRNA or glutaminyl-tRNA synthetases. The reaction takes place in the presence of glutamine and ATP through an activated phospho-Asp-tRNA(Asn) or phospho-Glu-tRNA(Gln). The sequence is that of Aspartyl/glutamyl-tRNA(Asn/Gln) amidotransferase subunit C from Roseiflexus sp. (strain RS-1).